A 559-amino-acid chain; its full sequence is Chaperonin GroEL 3 (559 aa).

Residues Asp-88–Thr-92, Gly-426, and Asp-507 each bind ATP.

This sequence belongs to the chaperonin (HSP60) family. Forms a cylinder of 14 subunits composed of two heptameric rings stacked back-to-back. Interacts with the co-chaperonin GroES.

It localises to the cytoplasm. It catalyses the reaction ATP + H2O + a folded polypeptide = ADP + phosphate + an unfolded polypeptide.. In terms of biological role, together with its co-chaperonin GroES, plays an essential role in assisting protein folding. The GroEL-GroES system forms a nano-cage that allows encapsulation of the non-native substrate proteins and provides a physical environment optimized to promote and accelerate protein folding. This chain is Chaperonin GroEL 3, found in Methylococcus capsulatus (strain ATCC 33009 / NCIMB 11132 / Bath).